A 208-amino-acid polypeptide reads, in one-letter code: Outer-membrane lipoprotein carrier protein (208 aa).

A signal peptide spans M1–A22.

It belongs to the LolA family. In terms of assembly, monomer.

The protein resides in the periplasm. Participates in the translocation of lipoproteins from the inner membrane to the outer membrane. Only forms a complex with a lipoprotein if the residue after the N-terminal Cys is not an aspartate (The Asp acts as a targeting signal to indicate that the lipoprotein should stay in the inner membrane). The sequence is that of Outer-membrane lipoprotein carrier protein from Shewanella loihica (strain ATCC BAA-1088 / PV-4).